The following is a 155-amino-acid chain: uncharacterized protein (155 aa).

Residues 4–65 enclose the HTH asnC-type domain; it reads IDEVDEIILR…IIDHSFLGEF (62 aa). Positions 23–42 form a DNA-binding region, H-T-H motif; sequence LTELSRKVGLTPAAIKNRVE.

This is an uncharacterized protein from Pyrococcus furiosus (strain ATCC 43587 / DSM 3638 / JCM 8422 / Vc1).